A 282-amino-acid polypeptide reads, in one-letter code: Bis(5'-nucleosyl)-tetraphosphatase, symmetrical (282 aa).

It belongs to the Ap4A hydrolase family.

It catalyses the reaction P(1),P(4)-bis(5'-adenosyl) tetraphosphate + H2O = 2 ADP + 2 H(+). Functionally, hydrolyzes diadenosine 5',5'''-P1,P4-tetraphosphate to yield ADP. The sequence is that of Bis(5'-nucleosyl)-tetraphosphatase, symmetrical from Burkholderia pseudomallei (strain 1106a).